The chain runs to 465 residues: Type II restriction enzyme BsuMI component YdjA (465 aa).

In terms of assembly, bsuMI restriction activity requires YdiR, YdiS and YdjA.

The enzyme catalyses Endonucleolytic cleavage of DNA to give specific double-stranded fragments with terminal 5'-phosphates.. In terms of biological role, a P subtype restriction enzyme that recognizes the double-stranded sequence 5'-CTCGAG-3'; the cleavage site is unknown. This Bacillus subtilis (strain 168) protein is Type II restriction enzyme BsuMI component YdjA (ydjA).